A 204-amino-acid polypeptide reads, in one-letter code: MELKVLNISLNSLNTVEVDDTIFARDFNQALVHQVTTAYMSGSRQGSKAQKNRSAVSGGGKRPWAQKGTGRARAGTTRGPIWRSGGVTFATQPRSYAQKVNKKMYKGAISIIFSELVRSERLKVVKEFDIKEVKTKNMIALLKVLNVKDALLMTDELDENLYLSSRNLYHVGVCDTQSIDPVSLIGYDNVVVTELALKKIEVML.

Positions 42 to 55 (GSRQGSKAQKNRSA) are enriched in polar residues. Residues 42-85 (GSRQGSKAQKNRSAVSGGGKRPWAQKGTGRARAGTTRGPIWRSG) are disordered. Positions 68–79 (GTGRARAGTTRG) are enriched in low complexity.

Belongs to the universal ribosomal protein uL4 family. In terms of assembly, part of the 50S ribosomal subunit.

Its function is as follows. One of the primary rRNA binding proteins, this protein initially binds near the 5'-end of the 23S rRNA. It is important during the early stages of 50S assembly. It makes multiple contacts with different domains of the 23S rRNA in the assembled 50S subunit and ribosome. Forms part of the polypeptide exit tunnel. This Vesicomyosocius okutanii subsp. Calyptogena okutanii (strain HA) protein is Large ribosomal subunit protein uL4.